Consider the following 262-residue polypeptide: Hydroxyethylthiazole kinase (262 aa).

Methionine 41 lines the substrate pocket. Residues arginine 117 and serine 163 each contribute to the ATP site. A substrate-binding site is contributed by glycine 190.

Belongs to the Thz kinase family. Mg(2+) is required as a cofactor.

It carries out the reaction 5-(2-hydroxyethyl)-4-methylthiazole + ATP = 4-methyl-5-(2-phosphooxyethyl)-thiazole + ADP + H(+). It participates in cofactor biosynthesis; thiamine diphosphate biosynthesis; 4-methyl-5-(2-phosphoethyl)-thiazole from 5-(2-hydroxyethyl)-4-methylthiazole: step 1/1. Its function is as follows. Catalyzes the phosphorylation of the hydroxyl group of 4-methyl-5-beta-hydroxyethylthiazole (THZ). The sequence is that of Hydroxyethylthiazole kinase from Levilactobacillus brevis (strain ATCC 367 / BCRC 12310 / CIP 105137 / JCM 1170 / LMG 11437 / NCIMB 947 / NCTC 947) (Lactobacillus brevis).